Consider the following 350-residue polypeptide: Phospho-2-dehydro-3-deoxyheptonate aldolase, Phe-sensitive (350 aa).

An N6-acetyllysine modification is found at Lys244.

This sequence belongs to the class-I DAHP synthase family. In terms of assembly, homotetramer.

It carries out the reaction D-erythrose 4-phosphate + phosphoenolpyruvate + H2O = 7-phospho-2-dehydro-3-deoxy-D-arabino-heptonate + phosphate. It functions in the pathway metabolic intermediate biosynthesis; chorismate biosynthesis; chorismate from D-erythrose 4-phosphate and phosphoenolpyruvate: step 1/7. Stereospecific condensation of phosphoenolpyruvate (PEP) and D-erythrose-4-phosphate (E4P) giving rise to 3-deoxy-D-arabino-heptulosonate-7-phosphate (DAHP). This chain is Phospho-2-dehydro-3-deoxyheptonate aldolase, Phe-sensitive (aroG), found in Escherichia coli O157:H7.